Consider the following 248-residue polypeptide: Triosephosphate isomerase (248 aa).

9 to 11 contributes to the substrate binding site; sequence NWK. His94 (electrophile) is an active-site residue. The active-site Proton acceptor is Glu166. Residues Gly172, Ser212, and 233–234 contribute to the substrate site; that span reads GG.

Belongs to the triosephosphate isomerase family. As to quaternary structure, homodimer.

It localises to the cytoplasm. It catalyses the reaction D-glyceraldehyde 3-phosphate = dihydroxyacetone phosphate. Its pathway is carbohydrate biosynthesis; gluconeogenesis. It participates in carbohydrate degradation; glycolysis; D-glyceraldehyde 3-phosphate from glycerone phosphate: step 1/1. In terms of biological role, involved in the gluconeogenesis. Catalyzes stereospecifically the conversion of dihydroxyacetone phosphate (DHAP) to D-glyceraldehyde-3-phosphate (G3P). The sequence is that of Triosephosphate isomerase from Alkaliphilus oremlandii (strain OhILAs) (Clostridium oremlandii (strain OhILAs)).